The following is a 294-amino-acid chain: Indole-3-glycerol phosphate synthase (294 aa).

The protein belongs to the TrpC family.

The enzyme catalyses 1-(2-carboxyphenylamino)-1-deoxy-D-ribulose 5-phosphate + H(+) = (1S,2R)-1-C-(indol-3-yl)glycerol 3-phosphate + CO2 + H2O. It functions in the pathway amino-acid biosynthesis; L-tryptophan biosynthesis; L-tryptophan from chorismate: step 4/5. The protein is Indole-3-glycerol phosphate synthase of Parasynechococcus marenigrum (strain WH8102).